A 566-amino-acid polypeptide reads, in one-letter code: Putative UDP-glucuronate:xylan alpha-glucuronosyltransferase 5 (566 aa).

A helical; Signal-anchor for type II membrane protein membrane pass occupies residues 17-37 (LILISLSFLGLLLNFKPLFLL). Mn(2+)-binding residues include Asp-372 and Asp-374. Substrate contacts are provided by residues 372 to 374 (DAD), 401 to 403 (NSG), 428 to 432 (NGGDQ), and 475 to 480 (HYLGLK). His-475 is a binding site for Mn(2+).

The protein belongs to the glycosyltransferase 8 family. Glycogenin subfamily. It depends on Mn(2+) as a cofactor.

The protein resides in the golgi apparatus membrane. May be involved in the substitutions of the xylan backbone in stem glucuronoxylan. This chain is Putative UDP-glucuronate:xylan alpha-glucuronosyltransferase 5 (GUX5), found in Arabidopsis thaliana (Mouse-ear cress).